The following is a 198-amino-acid chain: Probable GTP-binding protein EngB (198 aa).

The EngB-type G domain occupies 27–198 (DLPEVALAGR…ESWDTILSEL (172 aa)). Residues 35 to 42 (GRSNVGKS), 62 to 66 (GKTQL), 80 to 83 (DVPG), 147 to 150 (TKAD), and 179 to 181 (FSS) contribute to the GTP site. Ser-42 and Thr-64 together coordinate Mg(2+).

It belongs to the TRAFAC class TrmE-Era-EngA-EngB-Septin-like GTPase superfamily. EngB GTPase family. The cofactor is Mg(2+).

Functionally, necessary for normal cell division and for the maintenance of normal septation. This Streptococcus agalactiae serotype Ia (strain ATCC 27591 / A909 / CDC SS700) protein is Probable GTP-binding protein EngB.